Consider the following 155-residue polypeptide: Small ribosomal subunit protein uS7cz/uS7cy (155 aa).

Belongs to the universal ribosomal protein uS7 family. Part of the 30S ribosomal subunit.

It localises to the plastid. Its function is as follows. One of the primary rRNA binding proteins, it binds directly to 16S rRNA where it nucleates assembly of the head domain of the 30S subunit. This Cuscuta exaltata (Tall dodder) protein is Small ribosomal subunit protein uS7cz/uS7cy (rps7-A).